A 468-amino-acid chain; its full sequence is Protein CA_C1420 (468 aa).

The unknown stretch occupies residues 1–289 (MSLNGFYLLP…LKELERIRKD (289 aa)). Positions 296 to 468 (QEKDPYVKLA…KFMVTRHKES (173 aa)) constitute an AMMECR1 domain.

This chain is Protein CA_C1420, found in Clostridium acetobutylicum (strain ATCC 824 / DSM 792 / JCM 1419 / IAM 19013 / LMG 5710 / NBRC 13948 / NRRL B-527 / VKM B-1787 / 2291 / W).